Consider the following 416-residue polypeptide: Acyl-coenzyme A amino acid N-acyltransferase 1 (416 aa).

Residue Ser125 is modified to Phosphoserine. Catalysis depends on charge relay system residues Ser235, Asp325, and His359. Ser414 carries the phosphoserine modification. The short motif at Ser414 to Leu416 is the Microbody targeting signal element.

It belongs to the C/M/P thioester hydrolase family. In terms of tissue distribution, expressed mainly in liver and kidney with low levels in adrenal and little or no expression in other tissues.

Its subcellular location is the peroxisome. It catalyses the reaction tetracosanoyl-CoA + taurine = N-tetracosanoyl-taurine + CoA + H(+). It carries out the reaction eicosanoyl-CoA + taurine = N-eicosanoyl-taurine + CoA + H(+). The catalysed reaction is taurine + octadecanoyl-CoA = N-octadecanoyl-taurine + CoA + H(+). The enzyme catalyses taurine + hexadecanoyl-CoA = N-hexadecanoyl-taurine + CoA + H(+). It catalyses the reaction tetradecanoyl-CoA + taurine = N-tetradecanoyl-taurine + CoA + H(+). It carries out the reaction dodecanoyl-CoA + taurine = N-dodecanoyl-taurine + CoA + H(+). Acyltransferase which efficiently conjugates very long-chain and long-chain fatty acids to taurine. Shows no conjugation activity in the presence of glycine. In Mus musculus (Mouse), this protein is Acyl-coenzyme A amino acid N-acyltransferase 1.